Consider the following 179-residue polypeptide: MAKLHDYYKDEVVKQLMSQFDYNSVMQVPRVEKITLNMGVGEAIADKKLLDNAAADLAAISGQKPFITKARKSVAGFKIRQGYPIGCKVTLRGERMWEFLERLITIAVPRIRDFRGLSAKSFDGRGNYSMGVREQIIFPEIDYDKVDRVRGLDITITTTAKSDDEGRALLAAFKFPFRK.

Belongs to the universal ribosomal protein uL5 family. Part of the 50S ribosomal subunit; part of the 5S rRNA/L5/L18/L25 subcomplex. Contacts the 5S rRNA and the P site tRNA. Forms a bridge to the 30S subunit in the 70S ribosome.

Its function is as follows. This is one of the proteins that bind and probably mediate the attachment of the 5S RNA into the large ribosomal subunit, where it forms part of the central protuberance. In the 70S ribosome it contacts protein S13 of the 30S subunit (bridge B1b), connecting the 2 subunits; this bridge is implicated in subunit movement. Contacts the P site tRNA; the 5S rRNA and some of its associated proteins might help stabilize positioning of ribosome-bound tRNAs. This Yersinia enterocolitica serotype O:8 / biotype 1B (strain NCTC 13174 / 8081) protein is Large ribosomal subunit protein uL5.